The following is a 49-amino-acid chain: Large ribosomal subunit protein bL32 (49 aa).

The protein belongs to the bacterial ribosomal protein bL32 family.

This Nitratiruptor sp. (strain SB155-2) protein is Large ribosomal subunit protein bL32.